A 434-amino-acid polypeptide reads, in one-letter code: UDP-N-acetylglucosamine 1-carboxyvinyltransferase (434 aa).

22 to 23 is a binding site for phosphoenolpyruvate; that stretch reads KN. Arginine 93 is a UDP-N-acetyl-alpha-D-glucosamine binding site. The active-site Proton donor is the cysteine 117. Residue cysteine 117 is modified to 2-(S-cysteinyl)pyruvic acid O-phosphothioketal. 2 residues coordinate UDP-N-acetyl-alpha-D-glucosamine: aspartate 307 and valine 329.

This sequence belongs to the EPSP synthase family. MurA subfamily.

It localises to the cytoplasm. The enzyme catalyses phosphoenolpyruvate + UDP-N-acetyl-alpha-D-glucosamine = UDP-N-acetyl-3-O-(1-carboxyvinyl)-alpha-D-glucosamine + phosphate. It functions in the pathway cell wall biogenesis; peptidoglycan biosynthesis. Cell wall formation. Adds enolpyruvyl to UDP-N-acetylglucosamine. This is UDP-N-acetylglucosamine 1-carboxyvinyltransferase from Coxiella burnetii (strain CbuG_Q212) (Coxiella burnetii (strain Q212)).